The following is a 147-amino-acid chain: Hemoglobin subunit delta (147 aa).

Positions 3–147 constitute a Globin domain; sequence HLTPEEKALV…VANALAHKYH (145 aa). At serine 51 the chain carries Phosphoserine. Residues histidine 64 and histidine 93 each contribute to the heme b site.

The protein belongs to the globin family. Heterotetramer of two delta chains and two alpha chains. Red blood cells.

This is Hemoglobin subunit delta (HBD) from Trichechus manatus (Caribbean manatee).